A 114-amino-acid polypeptide reads, in one-letter code: Progonadoliberin-2 (114 aa).

Residues 1–24 (MASSRRGLLLLLMLLTAHPGPSEA) form the signal peptide. Glycine 34 carries the glycine amide modification. The tract at residues 35 to 59 (GKRALSSAQDPQNALRPPAGSPAQA) is disordered.

The protein belongs to the GnRH family.

Its subcellular location is the secreted. Stimulates the secretion of gonadotropins; it stimulates the secretion of both luteinizing and follicle-stimulating hormones. This chain is Progonadoliberin-2 (GNRH2), found in Macaca mulatta (Rhesus macaque).